The sequence spans 117 residues: UPF0145 protein CV_4322 (117 aa).

This sequence belongs to the UPF0145 family.

This is UPF0145 protein CV_4322 from Chromobacterium violaceum (strain ATCC 12472 / DSM 30191 / JCM 1249 / CCUG 213 / NBRC 12614 / NCIMB 9131 / NCTC 9757 / MK).